A 370-amino-acid polypeptide reads, in one-letter code: 3-isopropylmalate dehydrogenase (370 aa).

77 to 90 contacts NAD(+); that stretch reads GPKWDSVPYEVRPE. Residues Arg-97, Arg-107, Arg-135, and Asp-226 each contribute to the substrate site. Residues Asp-226, Asp-250, and Asp-254 each contribute to the Mg(2+) site. Position 290-302 (290-302) interacts with NAD(+); it reads GSAPDIAGKGIAN.

It belongs to the isocitrate and isopropylmalate dehydrogenases family. LeuB type 1 subfamily. In terms of assembly, homodimer. It depends on Mg(2+) as a cofactor. Mn(2+) is required as a cofactor.

The protein localises to the cytoplasm. It catalyses the reaction (2R,3S)-3-isopropylmalate + NAD(+) = 4-methyl-2-oxopentanoate + CO2 + NADH. Its pathway is amino-acid biosynthesis; L-leucine biosynthesis; L-leucine from 3-methyl-2-oxobutanoate: step 3/4. Functionally, catalyzes the oxidation of 3-carboxy-2-hydroxy-4-methylpentanoate (3-isopropylmalate) to 3-carboxy-4-methyl-2-oxopentanoate. The product decarboxylates to 4-methyl-2 oxopentanoate. The chain is 3-isopropylmalate dehydrogenase from Rhizobium johnstonii (strain DSM 114642 / LMG 32736 / 3841) (Rhizobium leguminosarum bv. viciae).